Here is a 273-residue protein sequence, read N- to C-terminus: 2-dehydro-3-deoxyphosphooctonate aldolase (273 aa).

The protein belongs to the KdsA family.

It localises to the cytoplasm. The enzyme catalyses D-arabinose 5-phosphate + phosphoenolpyruvate + H2O = 3-deoxy-alpha-D-manno-2-octulosonate-8-phosphate + phosphate. Its pathway is carbohydrate biosynthesis; 3-deoxy-D-manno-octulosonate biosynthesis; 3-deoxy-D-manno-octulosonate from D-ribulose 5-phosphate: step 2/3. It participates in bacterial outer membrane biogenesis; lipopolysaccharide biosynthesis. This chain is 2-dehydro-3-deoxyphosphooctonate aldolase, found in Cyanothece sp. (strain PCC 7425 / ATCC 29141).